We begin with the raw amino-acid sequence, 274 residues long: MPFRSNNPITRDELLSRFFPQFHPVTTFNSGLSGGSFLIEHQGQRFVVRQPHDPDAPQSAFLHQYRALSQLPACIAPKPHLYLRDWMVVDYLPGEVKTYLPDTNELAGLLYYLHQQPRFGWRITLLPLLELYWQQSDPARRTVGWLRMLKRLRKAREPRPLRLSPLHMDVHAGNLVHSASGLKLIDWEYAGDGDIALELAAVWVENTEQHRQLVNDYATRAKIYPAQLWRQVRRWFPWLLMLKAGWFEYRWRQTGDQQFIRLADDTWRQLLIKQ.

The protein belongs to the thiamine kinase family.

It carries out the reaction thiamine + ATP = thiamine phosphate + ADP + H(+). It participates in cofactor biosynthesis; thiamine diphosphate biosynthesis; thiamine phosphate from thiamine: step 1/1. In terms of biological role, catalyzes the ATP-dependent phosphorylation of thiamine to thiamine phosphate. Is involved in thiamine salvage. The sequence is that of Thiamine kinase from Escherichia coli O157:H7 (strain EC4115 / EHEC).